The following is a 208-amino-acid chain: Uracil phosphoribosyltransferase (208 aa).

5-phospho-alpha-D-ribose 1-diphosphate is bound by residues Arg78, Arg103, and 130–138 (DPMLATANS). Residues Ile193 and 198–200 (GDA) contribute to the uracil site. Asp199 contributes to the 5-phospho-alpha-D-ribose 1-diphosphate binding site.

This sequence belongs to the UPRTase family. Mg(2+) serves as cofactor.

It catalyses the reaction UMP + diphosphate = 5-phospho-alpha-D-ribose 1-diphosphate + uracil. It functions in the pathway pyrimidine metabolism; UMP biosynthesis via salvage pathway; UMP from uracil: step 1/1. With respect to regulation, allosterically activated by GTP. In terms of biological role, catalyzes the conversion of uracil and 5-phospho-alpha-D-ribose 1-diphosphate (PRPP) to UMP and diphosphate. The protein is Uracil phosphoribosyltransferase of Brucella abortus biovar 1 (strain 9-941).